A 539-amino-acid chain; its full sequence is Phosphoenolpyruvate carboxykinase (ATP) (539 aa).

Arg-64, Tyr-206, and Lys-212 together coordinate substrate. ATP-binding positions include Lys-212, His-231, and 247–255 (GLSGTGKTT). Residues Lys-212 and His-231 each coordinate Mn(2+). Residue Asp-268 coordinates Mn(2+). Residues Glu-296, Arg-332, 448-449 (RI), and Thr-454 each bind ATP. Arg-332 is a substrate binding site.

Belongs to the phosphoenolpyruvate carboxykinase (ATP) family. Monomer. Mn(2+) serves as cofactor.

It is found in the cytoplasm. The enzyme catalyses oxaloacetate + ATP = phosphoenolpyruvate + ADP + CO2. Its pathway is carbohydrate biosynthesis; gluconeogenesis. In terms of biological role, involved in the gluconeogenesis. Catalyzes the conversion of oxaloacetate (OAA) to phosphoenolpyruvate (PEP) through direct phosphoryl transfer between the nucleoside triphosphate and OAA. The polypeptide is Phosphoenolpyruvate carboxykinase (ATP) (Erwinia tasmaniensis (strain DSM 17950 / CFBP 7177 / CIP 109463 / NCPPB 4357 / Et1/99)).